The following is a 185-amino-acid chain: Ribosome-recycling factor (185 aa).

Residues Lys-140–Thr-168 are disordered.

This sequence belongs to the RRF family.

The protein localises to the cytoplasm. Responsible for the release of ribosomes from messenger RNA at the termination of protein biosynthesis. May increase the efficiency of translation by recycling ribosomes from one round of translation to another. This is Ribosome-recycling factor from Lactobacillus helveticus (strain DPC 4571).